A 1404-amino-acid polypeptide reads, in one-letter code: DNA-directed RNA polymerase subunit beta' (1404 aa).

4 residues coordinate Zn(2+): Cys70, Cys72, Cys85, and Cys88. Positions 460, 462, and 464 each coordinate Mg(2+). 4 residues coordinate Zn(2+): Cys814, Cys888, Cys895, and Cys898.

It belongs to the RNA polymerase beta' chain family. As to quaternary structure, the RNAP catalytic core consists of 2 alpha, 1 beta, 1 beta' and 1 omega subunit. When a sigma factor is associated with the core the holoenzyme is formed, which can initiate transcription. Mg(2+) is required as a cofactor. Zn(2+) serves as cofactor.

The catalysed reaction is RNA(n) + a ribonucleoside 5'-triphosphate = RNA(n+1) + diphosphate. Its function is as follows. DNA-dependent RNA polymerase catalyzes the transcription of DNA into RNA using the four ribonucleoside triphosphates as substrates. The chain is DNA-directed RNA polymerase subunit beta' from Shewanella loihica (strain ATCC BAA-1088 / PV-4).